Reading from the N-terminus, the 405-residue chain is Envelope glycoprotein M (405 aa).

Residues Met-1–Thr-17 lie on the Intravirion side of the membrane. A helical transmembrane segment spans residues Leu-18–Pro-38. The Virion surface segment spans residues Asn-39–Glu-76. The helical transmembrane segment at Met-77–Cys-97 threads the bilayer. Topologically, residues Gly-98–Ala-121 are intravirion. A helical transmembrane segment spans residues Val-122–Ile-142. Over Gln-143–His-149 the chain is Virion surface. The helical transmembrane segment at Val-150–Ala-170 threads the bilayer. Residues Cys-171–Thr-192 are Intravirion-facing. Residues Phe-193–Leu-215 traverse the membrane as a helical segment. Residues Glu-216–Asn-245 are Virion surface-facing. The helical transmembrane segment at Leu-246–Met-266 threads the bilayer. A topological domain (intravirion) is located at residue Arg-267. Residues His-268 to Val-288 traverse the membrane as a helical segment. At Arg-289–Leu-299 the chain is on the virion surface side. A helical membrane pass occupies residues His-300–Ile-320. The Intravirion segment spans residues Arg-321–Pro-405. Positions Leu-346 to Pro-405 are disordered. Residues Gln-386–Thr-397 are compositionally biased toward polar residues.

It belongs to the herpesviridae glycoprotein M family. Interacts (via N-terminus) with gN (via N-terminus). The gM-gN heterodimer forms the gCII complex.

It is found in the virion membrane. The protein localises to the host Golgi apparatus. Its subcellular location is the host trans-Golgi network. The protein resides in the host endosome membrane. It localises to the host nucleus inner membrane. In terms of biological role, envelope glycoprotein important for virion assembly and egress. Plays a role in the correct incorporation of gH-gL into virion membrane. Directs the glycoprotein N (gN) to the host trans-Golgi network. The chain is Envelope glycoprotein M from Epstein-Barr virus (strain GD1) (HHV-4).